The following is a 227-amino-acid chain: Flagellar transcriptional regulator FtcR (227 aa).

One can recognise a Response regulatory domain in the interval 1–116 (MIVVVDDRDM…EILARINAIR (116 aa)). The segment at residues 127-226 (ADGTQLGPIR…KRFLGYCINI (100 aa)) is a DNA-binding region (ompR/PhoB-type).

Functionally, required for transcription of flagellar genes. This chain is Flagellar transcriptional regulator FtcR (ftcR), found in Brucella abortus (strain 2308).